Reading from the N-terminus, the 817-residue chain is Leucine--tRNA ligase (817 aa).

Positions 40–50 (PYPSGKLHMGH) match the 'HIGH' region motif. The 'KMSKS' region motif lies at 578 to 582 (KMSKS). Lys-581 lines the ATP pocket.

This sequence belongs to the class-I aminoacyl-tRNA synthetase family.

Its subcellular location is the cytoplasm. It catalyses the reaction tRNA(Leu) + L-leucine + ATP = L-leucyl-tRNA(Leu) + AMP + diphosphate. This chain is Leucine--tRNA ligase, found in Caldicellulosiruptor saccharolyticus (strain ATCC 43494 / DSM 8903 / Tp8T 6331).